We begin with the raw amino-acid sequence, 480 residues long: tRNA-2-methylthio-N(6)-dimethylallyladenosine synthase (480 aa).

The 117-residue stretch at 29-145 (GSFWIQTFGC…LEALLTQVDN (117 aa)) folds into the MTTase N-terminal domain. C38, C74, C108, C180, C184, and C187 together coordinate [4Fe-4S] cluster. The region spanning 166–403 (RDSTICAWVN…NALVERVALQ (238 aa)) is the Radical SAM core domain. The TRAM domain maps to 406 to 474 (SRYSGKVEQV…AFSLSGTPCD (69 aa)).

Belongs to the methylthiotransferase family. MiaB subfamily. As to quaternary structure, monomer. [4Fe-4S] cluster is required as a cofactor.

It localises to the cytoplasm. It carries out the reaction N(6)-dimethylallyladenosine(37) in tRNA + (sulfur carrier)-SH + AH2 + 2 S-adenosyl-L-methionine = 2-methylsulfanyl-N(6)-dimethylallyladenosine(37) in tRNA + (sulfur carrier)-H + 5'-deoxyadenosine + L-methionine + A + S-adenosyl-L-homocysteine + 2 H(+). In terms of biological role, catalyzes the methylthiolation of N6-(dimethylallyl)adenosine (i(6)A), leading to the formation of 2-methylthio-N6-(dimethylallyl)adenosine (ms(2)i(6)A) at position 37 in tRNAs that read codons beginning with uridine. In Prochlorococcus marinus (strain MIT 9303), this protein is tRNA-2-methylthio-N(6)-dimethylallyladenosine synthase.